The primary structure comprises 200 residues: MAEQNILTTPSPNADTTIVPPGSPHTHTEQPSGGHGGAFPPFESHTFLAQLIWLALAFGLLYYLMSKVALPRIEAILGDRAGRLSSDLNEAQRMKAEADAAGAAYETSLREAQAKAQAIAQETRNSLSAEADAKRKTLEAELNQRLAASEATIRARTSEAMGNVRTIAGETASAIVERLTGQAPDQASLNRALDATPAVH.

Residues 1–16 (MAEQNILTTPSPNADT) show a composition bias toward polar residues. Residues 1-38 (MAEQNILTTPSPNADTTIVPPGSPHTHTEQPSGGHGGA) are disordered. A helical membrane pass occupies residues 46–66 (TFLAQLIWLALAFGLLYYLMS).

Belongs to the ATPase B chain family. As to quaternary structure, F-type ATPases have 2 components, F(1) - the catalytic core - and F(0) - the membrane proton channel. F(1) has five subunits: alpha(3), beta(3), gamma(1), delta(1), epsilon(1). F(0) has three main subunits: a(1), b(2) and c(10-14). The alpha and beta chains form an alternating ring which encloses part of the gamma chain. F(1) is attached to F(0) by a central stalk formed by the gamma and epsilon chains, while a peripheral stalk is formed by the delta and b chains.

It localises to the cell inner membrane. F(1)F(0) ATP synthase produces ATP from ADP in the presence of a proton or sodium gradient. F-type ATPases consist of two structural domains, F(1) containing the extramembraneous catalytic core and F(0) containing the membrane proton channel, linked together by a central stalk and a peripheral stalk. During catalysis, ATP synthesis in the catalytic domain of F(1) is coupled via a rotary mechanism of the central stalk subunits to proton translocation. Functionally, component of the F(0) channel, it forms part of the peripheral stalk, linking F(1) to F(0). The b'-subunit is a diverged and duplicated form of b found in plants and photosynthetic bacteria. The chain is ATP synthase subunit b 2 (atpF2) from Methylorubrum populi (strain ATCC BAA-705 / NCIMB 13946 / BJ001) (Methylobacterium populi).